A 148-amino-acid polypeptide reads, in one-letter code: Large ribosomal subunit protein uL15 (148 aa).

The tract at residues 1–61 (MELNNLKPAI…GGQMPMQRRL (61 aa)) is disordered. Residues 30-39 (TATKGHKGQK) are compositionally biased toward basic residues.

The protein belongs to the universal ribosomal protein uL15 family. Part of the 50S ribosomal subunit.

In terms of biological role, binds to the 23S rRNA. The sequence is that of Large ribosomal subunit protein uL15 from Geobacter metallireducens (strain ATCC 53774 / DSM 7210 / GS-15).